A 581-amino-acid chain; its full sequence is Arginine--tRNA ligase (581 aa).

The short motif at 131–141 (ANPTGPLHVGH) is the 'HIGH' region element.

It belongs to the class-I aminoacyl-tRNA synthetase family. In terms of assembly, monomer.

It is found in the cytoplasm. It carries out the reaction tRNA(Arg) + L-arginine + ATP = L-arginyl-tRNA(Arg) + AMP + diphosphate. The chain is Arginine--tRNA ligase from Ruegeria pomeroyi (strain ATCC 700808 / DSM 15171 / DSS-3) (Silicibacter pomeroyi).